A 197-amino-acid polypeptide reads, in one-letter code: Protein-methionine-sulfoxide reductase heme-binding subunit MsrQ (197 aa).

A run of 6 helical transmembrane segments spans residues 10-30 (IFIV…MNLL), 42-62 (LGLG…LQKL), 75-95 (LGLW…FFIL), 110-130 (PYII…VTSN), 147-167 (LVYA…RSDL), and 169-189 (EWAI…PAVA).

Belongs to the MsrQ family. In terms of assembly, heterodimer of a catalytic subunit (MsrP) and a heme-binding subunit (MsrQ). The cofactor is FMN. Heme b serves as cofactor.

It localises to the cell inner membrane. Part of the MsrPQ system that repairs oxidized periplasmic proteins containing methionine sulfoxide residues (Met-O), using respiratory chain electrons. Thus protects these proteins from oxidative-stress damage caused by reactive species of oxygen and chlorine generated by the host defense mechanisms. MsrPQ is essential for the maintenance of envelope integrity under bleach stress, rescuing a wide series of structurally unrelated periplasmic proteins from methionine oxidation. MsrQ provides electrons for reduction to the reductase catalytic subunit MsrP, using the quinone pool of the respiratory chain. The sequence is that of Protein-methionine-sulfoxide reductase heme-binding subunit MsrQ from Pseudomonas putida (strain ATCC 47054 / DSM 6125 / CFBP 8728 / NCIMB 11950 / KT2440).